Here is a 215-residue protein sequence, read N- to C-terminus: Ion-translocating oxidoreductase complex subunit G (215 aa).

Residues Gly9–Ala29 traverse the membrane as a helical segment. Residue Thr176 is modified to FMN phosphoryl threonine.

It belongs to the RnfG family. The complex is composed of six subunits: RnfA, RnfB, RnfC, RnfD, RnfE and RnfG. FMN is required as a cofactor.

Its subcellular location is the cell inner membrane. In terms of biological role, part of a membrane-bound complex that couples electron transfer with translocation of ions across the membrane. In Shewanella amazonensis (strain ATCC BAA-1098 / SB2B), this protein is Ion-translocating oxidoreductase complex subunit G.